We begin with the raw amino-acid sequence, 958 residues long: Valine--tRNA ligase (958 aa).

The 'HIGH' region motif lies at 42–52 (PNVTGSLHMGH). The short motif at 554-558 (KMSKS) is the 'KMSKS' region element. Lysine 557 serves as a coordination point for ATP. Positions 887 to 956 (LVDVAAEMAR…TEQKAEFAKL (70 aa)) form a coiled coil.

It belongs to the class-I aminoacyl-tRNA synthetase family. ValS type 1 subfamily. As to quaternary structure, monomer.

The protein resides in the cytoplasm. The enzyme catalyses tRNA(Val) + L-valine + ATP = L-valyl-tRNA(Val) + AMP + diphosphate. In terms of biological role, catalyzes the attachment of valine to tRNA(Val). As ValRS can inadvertently accommodate and process structurally similar amino acids such as threonine, to avoid such errors, it has a 'posttransfer' editing activity that hydrolyzes mischarged Thr-tRNA(Val) in a tRNA-dependent manner. The polypeptide is Valine--tRNA ligase (Shewanella oneidensis (strain ATCC 700550 / JCM 31522 / CIP 106686 / LMG 19005 / NCIMB 14063 / MR-1)).